Consider the following 496-residue polypeptide: MASLQTPVMVGTVVGCVAGVVGFLAMSSNAATSLSVAPASTSTQIIANPSVIAPQYQGSVTSEDVAMEASQTDFAEVAEISSPVQVQSWSMIFSAMLAVPLAAAAMFFMKKSTTEERRPLVSIDDLLSVGKKAVVASAVVGAAAGSANAYPIFAQQAYGNPREATGRIVCANCHLASKPTEIEVPQAVLPDQVFEAVTKVPFSGPSGFFNVVDPSTVVGSVTFAGTQPVGFIQESGVPVSQALVDIATPGTPDTVFKATIKVPYDESLKQVAGNGRAAPLNVGAVLILPEGFRLAPPERIPEKMKEEINGLQFIQYSKDTPNILVVGPVPGKKYAEMTVALLSPDPRVDKKAEFGTLPIYVGGNRGRGQLYPTGEKSNNNIYNVEHSGKIADIQLNEKKRIYTVAVQQKDGEIINEDLPAGAELIVKVGDVVEAGQAISTNPNVGGFGQAESEIVLQNPGRVQAFLFFSFTVLATQTLLVVKKKQYEQVQLSEMNF.

The N-terminal 149 residues, 1–149 (MASLQTPVMV…VGAAAGSANA (149 aa)), are a transit peptide targeting the chloroplast. Heme-binding residues include Tyr-150, Cys-170, Cys-173, and His-174. The helical transmembrane segment at 462–481 (VQAFLFFSFTVLATQTLLVV) threads the bilayer.

It belongs to the cytochrome f family. In terms of assembly, interacts with plastocyanin and Rieske iron-sulfur protein. The cofactor is heme.

The protein resides in the plastid. It is found in the chloroplast thylakoid membrane. In terms of biological role, translocates protons across the thylakoid membrane and transfers electrons from photosystem II to photosystem I. It receives electrons from the Rieske iron-sulfur protein and passes them to plastocyanin. In Euglena gracilis, this protein is Cytochrome f, chloroplastic (petA).